A 630-amino-acid polypeptide reads, in one-letter code: A-type voltage-gated potassium channel KCND2 (630 aa).

Residues 1 to 184 lie on the Cytoplasmic side of the membrane; it reads MAAGVAAWLP…FENPHTSTMA (184 aa). The tract at residues 2 to 20 is interaction with KCNIP1, KCNIP2, and other family members; that stretch reads AAGVAAWLPFARAAAIGWM. Threonine 38 carries the post-translational modification Phosphothreonine. Residues 71–90 form an interaction with KCNIP1 region; the sequence is ERDFFYHPETQQYFFDRDPD. Zn(2+)-binding residues include histidine 105, cysteine 111, cysteine 132, and cysteine 133. Residues 185–206 form a helical membrane-spanning segment; the sequence is LVFYYVTGFFIAVSVIANVVET. The Extracellular portion of the chain corresponds to 207 to 226; that stretch reads VPCGSSPGHIKELPCGERYA. Residues 227–249 form a helical membrane-spanning segment; the sequence is VAFFCLDTACVMIFTVEYLLRLA. Residues 250 to 256 are Cytoplasmic-facing; the sequence is AAPSRYR. A helical membrane pass occupies residues 257–281; the sequence is FVRSVMSIIDVVAILPYYIGLVMTD. At 282 to 287 the chain is on the extracellular side; it reads NEDVSG. The helical; Voltage-sensor transmembrane segment at 288-307 threads the bilayer; the sequence is AFVTLRVFRVFRIFKFSRHS. Topologically, residues 308 to 321 are cytoplasmic; that stretch reads QGLRILGYTLKSCA. Residues 308–321 form an S4-S5 linker region; that stretch reads QGLRILGYTLKSCA. A helical transmembrane segment spans residues 322–345; it reads SELGFLLFSLTMAIIIFATVMFYA. Residues 346–357 lie on the Extracellular side of the membrane; that stretch reads EKGSSASKFTSI. An intramembrane region (helical) is located at residues 358–369; that stretch reads PAAFWYTIVTMT. Residues threonine 370, leucine 371, glycine 372, and tyrosine 373 each coordinate K(+). Positions 370–375 match the Selectivity filter motif; the sequence is TLGYGD. An intramembrane segment occupies 370 to 377; that stretch reads TLGYGDMV. Residues 378 to 380 are Extracellular-facing; the sequence is PKT. Residues 381 to 403 traverse the membrane as a helical segment; it reads IAGKIFGSICSLSGVLVIALPVP. Over 404–630 the chain is Cytoplasmic; it reads VIVSNFSRIY…GGNIVRVSAL (227 aa). Serine 438 bears the Phosphoserine mark. The interval 474–489 is required for dendritic targeting; that stretch reads FETQHHHLLHCLEKTT. The interval 474 to 630 is important for normal channel activation and inactivation, for interaction with KCNIP2, and probably other family members as well; the sequence is FETQHHHLLH…GGNIVRVSAL (157 aa). A phosphoserine mark is found at serine 548, serine 552, serine 572, and serine 575. Residues 600–623 are disordered; the sequence is IPTPPVTTPEGDDRPESPEYSGGN. A phosphothreonine mark is found at threonine 602 and threonine 607. Residue serine 616 is modified to Phosphoserine. Positions 627–630 match the PDZ-binding motif; that stretch reads VSAL.

The protein belongs to the potassium channel family. D (Shal) (TC 1.A.1.2) subfamily. Kv4.2/KCND2 sub-subfamily. As to quaternary structure, homotetramer or heterotetramer with KCND1 or KCND3. Associates with the regulatory subunits KCNIP1, KCNIP2, KCNIP3 and KCNIP4. Interacts with DPP6, DPP10, DLG4 and DLG1. In vivo, probably exists as heteromeric complex containing variable proportions of KCND1, KCND2, KCND3, KCNIP1, KCNIP2, KCNIP3, KCNIP4, DPP6 and DPP10. The tetrameric channel can associate with up to four regulatory subunits, such as KCNIP2 or KCNIP4. Interaction with KCNIP3 promotes tetramerization and formation of a functional potassium channel. Interaction with four KCNIP4 chains does not reduce interaction with DPP10. Probably part of a complex consisting of KCNIP1, KCNIP2 isoform 3 and KCND2. Interacts with FLNA and FLNC. Interacts with NCS1/FREQ. Identified in a complex with cAMP-dependent protein kinase (PKA), CAV3, AKAP6 and KCND3 in cardiac myocytes. Interacts (via S1 and S2 helices) with DPP6; this interaction stabilizes the conformation of the S1-S2 helices and facilitates S4 conformational change, including S4 sliding up and down, thereby accelerating activation, inactivation, and recovery. Phosphorylation at Ser-438 in response to MAPK activation is increased in stimulated dendrites. Interaction with KCNIP2 and DPP6 propomtes phosphorylation by PKA at Ser-552. Phosphorylation at Ser-552 has no effect on interaction with KCNIP3, but is required for the regulation of channel activity by KCNIP3. Phosphorylation at Ser-552 leads to KCND2 internalization. Phosphorylated by MAPK in response to signaling via the metabotropic glutamate receptor GRM5. Phosphorylation at Ser-616 is required for the down-regulation of neuronal A-type currents in response to signaling via GRM5. Detected in brain frontal cortex.

Its subcellular location is the cell membrane. The protein localises to the cell projection. It is found in the dendrite. It localises to the synapse. The protein resides in the perikaryon. Its subcellular location is the postsynaptic cell membrane. The protein localises to the dendritic spine. It is found in the sarcolemma. It localises to the cell junction. The protein resides in the membrane. Its subcellular location is the caveola. It catalyses the reaction K(+)(in) = K(+)(out). Voltage-gated potassium channel that mediates transmembrane potassium transport in excitable membranes, primarily in the brain. Mediates the major part of the dendritic A-type current I(SA) in brain neurons. This current is activated at membrane potentials that are below the threshold for action potentials. It regulates neuronal excitability, prolongs the latency before the first spike in a series of action potentials, regulates the frequency of repetitive action potential firing, shortens the duration of action potentials and regulates the back-propagation of action potentials from the neuronal cell body to the dendrites. Contributes to the regulation of the circadian rhythm of action potential firing in suprachiasmatic nucleus neurons, which regulates the circadian rhythm of locomotor activity. Functions downstream of the metabotropic glutamate receptor GRM5 and plays a role in neuronal excitability and in nociception mediated by activation of GRM5. Mediates the transient outward current I(to) in rodent heart left ventricle apex cells, but not in human heart, where this current is mediated by another family member. Forms tetrameric potassium-selective channels through which potassium ions pass in accordance with their electrochemical gradient. The channel alternates between opened and closed conformations in response to the voltage difference across the membrane. Can form functional homotetrameric channels and heterotetrameric channels that contain variable proportions of KCND2 and KCND3; channel properties depend on the type of pore-forming alpha subunits that are part of the channel. In vivo, membranes probably contain a mixture of heteromeric potassium channel complexes. Interaction with specific isoforms of the regulatory subunits KCNIP1, KCNIP2, KCNIP3 or KCNIP4 strongly increases expression at the cell surface and thereby increases channel activity; it modulates the kinetics of channel activation and inactivation, shifts the threshold for channel activation to more negative voltage values, shifts the threshold for inactivation to less negative voltages and accelerates recovery after inactivation. Likewise, interaction with DPP6 or DPP10 promotes expression at the cell membrane and regulates both channel characteristics and activity. Upon depolarization, the channel goes from a resting closed state (C state) to an activated but non-conducting state (C* state), from there, the channel may either inactivate (I state) or open (O state). This is A-type voltage-gated potassium channel KCND2 from Oryctolagus cuniculus (Rabbit).